A 147-amino-acid polypeptide reads, in one-letter code: Protein-export protein SecB (147 aa).

Belongs to the SecB family. Homotetramer, a dimer of dimers. One homotetramer interacts with 1 SecA dimer.

Its subcellular location is the cytoplasm. Its function is as follows. One of the proteins required for the normal export of preproteins out of the cell cytoplasm. It is a molecular chaperone that binds to a subset of precursor proteins, maintaining them in a translocation-competent state. It also specifically binds to its receptor SecA. The polypeptide is Protein-export protein SecB (Neisseria meningitidis serogroup B (strain ATCC BAA-335 / MC58)).